The primary structure comprises 217 residues: MPEGARRDLAGLRREYTRAGLAEDGADPDPIRQFGRWFEEALRAGLYEPNAMVLATATPDGRPSARTVLLKGFDERGFVFYTNYGGRKSREIEANPRVALLFYWGELERQVRVEGTAGRTSEEESDAYFATRPRGSQLGAWASRQSEPAESREELERRLAELERRFEGRPVPRPPFWGGYRVRPERIEFWQGRENRLHDRLLYAREGPGWRRVRLQP.

Residues 13-16 (RREY) and lysine 71 each bind substrate. FMN-binding positions include 66–71 (RTVLLK), 81–82 (YT), arginine 87, lysine 88, and glutamine 110. Substrate-binding residues include tyrosine 128, arginine 132, and serine 136. Residues 145–146 (QS) and tryptophan 190 each bind FMN. 196–198 (RLH) lines the substrate pocket. Arginine 200 is an FMN binding site.

Belongs to the pyridoxamine 5'-phosphate oxidase family. In terms of assembly, homodimer. FMN serves as cofactor.

The enzyme catalyses pyridoxamine 5'-phosphate + O2 + H2O = pyridoxal 5'-phosphate + H2O2 + NH4(+). It carries out the reaction pyridoxine 5'-phosphate + O2 = pyridoxal 5'-phosphate + H2O2. It functions in the pathway cofactor metabolism; pyridoxal 5'-phosphate salvage; pyridoxal 5'-phosphate from pyridoxamine 5'-phosphate: step 1/1. It participates in cofactor metabolism; pyridoxal 5'-phosphate salvage; pyridoxal 5'-phosphate from pyridoxine 5'-phosphate: step 1/1. Catalyzes the oxidation of either pyridoxine 5'-phosphate (PNP) or pyridoxamine 5'-phosphate (PMP) into pyridoxal 5'-phosphate (PLP). This is Pyridoxine/pyridoxamine 5'-phosphate oxidase from Rubrobacter xylanophilus (strain DSM 9941 / JCM 11954 / NBRC 16129 / PRD-1).